The chain runs to 231 residues: MKRAVVVFSGGQDSTTCLAQARHQYDEVHCVTFDYGQRHRAEIDVARDLALKLGARAHKVLDVTLLNELAVSSLTRDSIPVPDYEPNADGIPNTFVPGRNILFLTLAAIYAYQVKAEAVITGVCETDFSGYPDCRDEFVKALNHAVNLGMAKDIRFETPLMWIDKAETWALADYWGQLDLVREETLTCYNGIKGDGCGHCAACNLRANGLNHYLSNKAAVMTAMKQKTGLR.

8–18 (FSGGQDSTTCL) contributes to the ATP binding site. Residues C188, C197, C200, and C203 each contribute to the Zn(2+) site.

It belongs to the QueC family. It depends on Zn(2+) as a cofactor.

The enzyme catalyses 7-carboxy-7-deazaguanine + NH4(+) + ATP = 7-cyano-7-deazaguanine + ADP + phosphate + H2O + H(+). Its pathway is purine metabolism; 7-cyano-7-deazaguanine biosynthesis. In terms of biological role, catalyzes the ATP-dependent conversion of 7-carboxy-7-deazaguanine (CDG) to 7-cyano-7-deazaguanine (preQ(0)). The sequence is that of 7-cyano-7-deazaguanine synthase from Salmonella paratyphi B (strain ATCC BAA-1250 / SPB7).